Here is an 89-residue protein sequence, read N- to C-terminus: Small ribosomal subunit protein uS15 (89 aa).

Residues 1–13 (MYLTSEKKEEIFS) are compositionally biased toward basic and acidic residues. The tract at residues 1–24 (MYLTSEKKEEIFSKHGKGKNDTGS) is disordered.

It belongs to the universal ribosomal protein uS15 family. As to quaternary structure, part of the 30S ribosomal subunit. Forms a bridge to the 50S subunit in the 70S ribosome, contacting the 23S rRNA.

In terms of biological role, one of the primary rRNA binding proteins, it binds directly to 16S rRNA where it helps nucleate assembly of the platform of the 30S subunit by binding and bridging several RNA helices of the 16S rRNA. Forms an intersubunit bridge (bridge B4) with the 23S rRNA of the 50S subunit in the ribosome. The polypeptide is Small ribosomal subunit protein uS15 (Christiangramia forsetii (strain DSM 17595 / CGMCC 1.15422 / KT0803) (Gramella forsetii)).